Reading from the N-terminus, the 101-residue chain is NAD(P)H-quinone oxidoreductase subunit 4L, chloroplastic (101 aa).

A run of 3 helical transmembrane segments spans residues 2 to 22 (MLEH…YGLI), 32 to 52 (MCLE…SDFF), and 61 to 81 (IFSI…SAIV).

This sequence belongs to the complex I subunit 4L family. In terms of assembly, NDH is composed of at least 16 different subunits, 5 of which are encoded in the nucleus.

It localises to the plastid. It is found in the chloroplast thylakoid membrane. The enzyme catalyses a plastoquinone + NADH + (n+1) H(+)(in) = a plastoquinol + NAD(+) + n H(+)(out). It catalyses the reaction a plastoquinone + NADPH + (n+1) H(+)(in) = a plastoquinol + NADP(+) + n H(+)(out). In terms of biological role, NDH shuttles electrons from NAD(P)H:plastoquinone, via FMN and iron-sulfur (Fe-S) centers, to quinones in the photosynthetic chain and possibly in a chloroplast respiratory chain. The immediate electron acceptor for the enzyme in this species is believed to be plastoquinone. Couples the redox reaction to proton translocation, and thus conserves the redox energy in a proton gradient. This Gossypium hirsutum (Upland cotton) protein is NAD(P)H-quinone oxidoreductase subunit 4L, chloroplastic.